A 338-amino-acid polypeptide reads, in one-letter code: Glycerol-3-phosphate dehydrogenase [NAD(P)+] (338 aa).

4 residues coordinate NADPH: Ser-12, Trp-13, Lys-34, and Lys-110. Sn-glycerol 3-phosphate is bound by residues Lys-110, Gly-141, and Ser-143. Ala-145 contributes to the NADPH binding site. Sn-glycerol 3-phosphate contacts are provided by Lys-196, Asp-249, Ser-259, Arg-260, and Asn-261. The active-site Proton acceptor is Lys-196. An NADPH-binding site is contributed by Arg-260. NADPH-binding residues include Val-284 and Glu-286.

This sequence belongs to the NAD-dependent glycerol-3-phosphate dehydrogenase family.

The protein localises to the cytoplasm. The enzyme catalyses sn-glycerol 3-phosphate + NAD(+) = dihydroxyacetone phosphate + NADH + H(+). The catalysed reaction is sn-glycerol 3-phosphate + NADP(+) = dihydroxyacetone phosphate + NADPH + H(+). The protein operates within membrane lipid metabolism; glycerophospholipid metabolism. Its function is as follows. Catalyzes the reduction of the glycolytic intermediate dihydroxyacetone phosphate (DHAP) to sn-glycerol 3-phosphate (G3P), the key precursor for phospholipid synthesis. The chain is Glycerol-3-phosphate dehydrogenase [NAD(P)+] from Ligilactobacillus salivarius (strain UCC118) (Lactobacillus salivarius).